The primary structure comprises 610 residues: MALSASRVQQAEELLQRPAERQLMRSQLAAAARSINWSYALFWSISDTQPGVLTWTDGFYNGEVKTRKISNSVELTSDQLVMQRSDQLRELYEALLSGEGDRRAAPARPAGSLSPEDLGDTEWYYVVSMTYAFRPGQGLPGRSFASDEHVWLCNAHLAGSKAFPRALLAKSASIQSILCIPVMGGVLELGTTDTVPEAPDLVSRATAAFWEPQCPSSSPSGRANETGEAAADDGTFAFEELDHNNGMDDIEAMTAAGGHGQEEELRLREAEALSDDASLEHITKEIEEFYSLCDEMDLQALPLPLEDGWTVDASNFEVPCSSPQPAPPPVDRATANVAADASRAPVYGSRATSFMAWTRSSQQSSCSDDAAPAAVVPAIEEPQRLLKKVVAGGGAWESCGGATGAAQEMSGTGTKNHVMSERKRREKLNEMFLVLKSLLPSIHRVNKASILAETIAYLKELQRRVQELESSREPASRPSETTTRLITRPSRGNNESVRKEVCAGSKRKSPELGRDDVERPPVLTMDAGTSNVTVTVSDKDVLLEVQCRWEELLMTRVFDAIKSLHLDVLSVQASAPDGFMGLKIRAQFAGSGAVVPWMISEALRKAIGKR.

Disordered regions lie at residues 402–422 and 468–524; these read ATGA…MSER and LESS…PVLT. One can recognise a bHLH domain in the interval 412–461; sequence TGTKNHVMSERKRREKLNEMFLVLKSLLPSIHRVNKASILAETIAYLKEL. Residues 481-495 are compositionally biased toward polar residues; sequence TTTRLITRPSRGNNE. Residues 508-519 are compositionally biased toward basic and acidic residues; the sequence is KSPELGRDDVER.

The protein belongs to the bHLH protein family. As to quaternary structure, efficient DNA binding requires dimerization with another bHLH protein.

The protein resides in the nucleus. Functionally, putative transcriptional activator. Controls tissue-specific synthesis of anthocyanin pigments in various parts of the maize plant. The chain is Anthocyanin regulatory Lc protein (LC) from Zea mays (Maize).